A 222-amino-acid polypeptide reads, in one-letter code: Dihydrophenazinedicarboxylate synthase (222 aa).

A substrate-binding site is contributed by serine 18. Residues 73–76 and 88–89 contribute to the FMN site; these read RIVV and ST. Histidine 90 lines the substrate pocket. FMN is bound by residues 94–95 and glutamine 117; that span reads QK. Positions 139 and 147 each coordinate substrate. Residues 152–153 and arginine 205 contribute to the FMN site; that span reads QS.

Belongs to the pyridoxamine 5'-phosphate oxidase family. FMN is required as a cofactor.

The catalysed reaction is (1R,6R)-1,4,5,5a,6,9-hexahydrophenazine-1,6-dicarboxylate + O2 = (1R,10aS)-1,4,10,10a-tetrahydrophenazine-1,6-dicarboxylate + H2O2. The enzyme catalyses (1R,10aS)-1,4,10,10a-tetrahydrophenazine-1,6-dicarboxylate + O2 = (5aS)-5,5a-dihydrophenazine-1,6-dicarboxylate + H2O2. It catalyses the reaction (1R,10aS)-1,4,10,10a-tetrahydrophenazine-1-carboxylate + O2 = (10aS)-10,10a-dihydrophenazine-1-carboxylate + H2O2. It carries out the reaction (1R)-1,4,5,10-tetrahydrophenazine-1-carboxylate + O2 = (10aS)-10,10a-dihydrophenazine-1-carboxylate + H2O2. It functions in the pathway antibiotic biosynthesis; phenazine biosynthesis. Involved in the biosynthesis of the antibiotic phenazine, a nitrogen-containing heterocyclic molecule having important roles in virulence, competition and biological control. Catalyzes several oxidations in the terminal steps of core phenazine biosynthesis. It oxidizes both hexahydrophenazine-1,6-dicarboxylic acid (HHPDC) and tetrahydrophenazine-1-carboxylic acid (THPCA) and thereby contributes to the generation of both phenazine-1,6-dicarboxylic acid (PDC) and phenazine-1-carboxylic acid (PCA). In Pseudomonas chlororaphis (Pseudomonas aureofaciens), this protein is Dihydrophenazinedicarboxylate synthase.